Reading from the N-terminus, the 220-residue chain is Translation initiation factor 6 (220 aa).

It belongs to the eIF-6 family.

Its function is as follows. Binds to the 50S ribosomal subunit and prevents its association with the 30S ribosomal subunit to form the 70S initiation complex. The polypeptide is Translation initiation factor 6 (Methanoculleus marisnigri (strain ATCC 35101 / DSM 1498 / JR1)).